The chain runs to 268 residues: MSGPILIFDSGIGGLSILDEIRKVMPQQSCCYLFDNARLPYGELEESELISGCVSLIIEQAMRINAGIVVVACNSASTLVLTTLREQLSIPVVGVVPAIKPAAKISKRRHIGLLATPGTIKRPYTKQLIDAFAEDCRVELFGSSELVMLAEAKLAGTAVDMQKLELLLAPIRTSELDTLVLGCTHFPVLATEIKQSLGQSIILLDSGKAVADRVLSLLKGNGLPKTASNKVVDYSAVFTTDDIAQGLKKRLVEEGFTSIEPHSSTNLR.

Substrate contacts are provided by residues 9 to 10 (DS) and 41 to 42 (YG). C73 (proton donor/acceptor) is an active-site residue. 74-75 (NS) contacts substrate. The active-site Proton donor/acceptor is C183. A substrate-binding site is contributed by 184–185 (TH).

This sequence belongs to the aspartate/glutamate racemases family.

The enzyme catalyses L-glutamate = D-glutamate. It participates in cell wall biogenesis; peptidoglycan biosynthesis. Functionally, provides the (R)-glutamate required for cell wall biosynthesis. This Shewanella piezotolerans (strain WP3 / JCM 13877) protein is Glutamate racemase.